Reading from the N-terminus, the 313-residue chain is Ribosomal RNA small subunit methyltransferase H (313 aa).

Residues 35-37 (GGH), Asp55, Phe79, Asp101, and Gln108 contribute to the S-adenosyl-L-methionine site.

It belongs to the methyltransferase superfamily. RsmH family.

It is found in the cytoplasm. The catalysed reaction is cytidine(1402) in 16S rRNA + S-adenosyl-L-methionine = N(4)-methylcytidine(1402) in 16S rRNA + S-adenosyl-L-homocysteine + H(+). In terms of biological role, specifically methylates the N4 position of cytidine in position 1402 (C1402) of 16S rRNA. The chain is Ribosomal RNA small subunit methyltransferase H from Shigella sonnei (strain Ss046).